The chain runs to 557 residues: Formate--tetrahydrofolate ligase (557 aa).

65 to 72 (TPAGEGKT) contributes to the ATP binding site.

This sequence belongs to the formate--tetrahydrofolate ligase family.

It catalyses the reaction (6S)-5,6,7,8-tetrahydrofolate + formate + ATP = (6R)-10-formyltetrahydrofolate + ADP + phosphate. It participates in one-carbon metabolism; tetrahydrofolate interconversion. The protein is Formate--tetrahydrofolate ligase of Methylococcus capsulatus (strain ATCC 33009 / NCIMB 11132 / Bath).